A 99-amino-acid polypeptide reads, in one-letter code: 10 kDa heat shock protein, mitochondrial (99 aa).

The protein belongs to the GroES chaperonin family. Homoheptamer arranged in a ring structure. 2 heptameric Hsp10 rings interact with a Hsp60 tetradecamer in the structure of a back-to-back double heptameric ring to form the symmetrical football complex.

Its subcellular location is the mitochondrion matrix. In terms of biological role, co-chaperonin implicated in mitochondrial protein import and macromolecular assembly. Together with Hsp60, facilitates the correct folding of imported proteins. May also prevent misfolding and promote the refolding and proper assembly of unfolded polypeptides generated under stress conditions in the mitochondrial matrix. The functional units of these chaperonins consist of heptameric rings of the large subunit Hsp60, which function as a back-to-back double ring. In a cyclic reaction, Hsp60 ring complexes bind one unfolded substrate protein per ring, followed by the binding of ATP and association with 2 heptameric rings of the co-chaperonin Hsp10. This leads to sequestration of the substrate protein in the inner cavity of Hsp60 where, for a certain period of time, it can fold undisturbed by other cell components. Synchronous hydrolysis of ATP in all Hsp60 subunits results in the dissociation of the chaperonin rings and the release of ADP and the folded substrate protein. In Oryzias latipes (Japanese rice fish), this protein is 10 kDa heat shock protein, mitochondrial (hspe1).